The primary structure comprises 312 residues: uncharacterized protein (312 aa).

Disordered stretches follow at residues 1 to 26 (MQKD…AMVA) and 45 to 106 (GNLQ…LPSG). Residues 8-17 (RFQRNKKKIN) show a composition bias toward basic residues. Residues 68–77 (NGKRNGDKVR) show a composition bias toward basic and acidic residues. The span at 85 to 103 (GHSSYAGSRISGGNSNSHL) shows a compositional bias: polar residues.

This is an uncharacterized protein from Schizosaccharomyces pombe (strain 972 / ATCC 24843) (Fission yeast).